A 166-amino-acid chain; its full sequence is Stress response protein NhaX (166 aa).

It belongs to the universal stress protein A family.

The chain is Stress response protein NhaX (nhaX) from Bacillus subtilis (strain 168).